Here is a 105-residue protein sequence, read N- to C-terminus: UPF0235 protein Mchl_2407 (105 aa).

Belongs to the UPF0235 family.

The protein is UPF0235 protein Mchl_2407 of Methylorubrum extorquens (strain CM4 / NCIMB 13688) (Methylobacterium extorquens).